Here is a 118-residue protein sequence, read N- to C-terminus: uncharacterized protein (118 aa).

This is an uncharacterized protein from Rickettsia prowazekii (strain Madrid E).